The primary structure comprises 575 residues: V-type ATP synthase alpha chain (575 aa).

238–245 is a binding site for ATP; sequence GPFGAGKT.

Belongs to the ATPase alpha/beta chains family.

The catalysed reaction is ATP + H2O + 4 H(+)(in) = ADP + phosphate + 5 H(+)(out). Produces ATP from ADP in the presence of a proton gradient across the membrane. The V-type alpha chain is a catalytic subunit. This Borrelia garinii subsp. bavariensis (strain ATCC BAA-2496 / DSM 23469 / PBi) (Borreliella bavariensis) protein is V-type ATP synthase alpha chain.